We begin with the raw amino-acid sequence, 962 residues long: Glycine dehydrogenase (decarboxylating) (962 aa).

Lysine 709 is subject to N6-(pyridoxal phosphate)lysine.

The protein belongs to the GcvP family. The glycine cleavage system is composed of four proteins: P, T, L and H. Pyridoxal 5'-phosphate serves as cofactor.

It catalyses the reaction N(6)-[(R)-lipoyl]-L-lysyl-[glycine-cleavage complex H protein] + glycine + H(+) = N(6)-[(R)-S(8)-aminomethyldihydrolipoyl]-L-lysyl-[glycine-cleavage complex H protein] + CO2. In terms of biological role, the glycine cleavage system catalyzes the degradation of glycine. The P protein binds the alpha-amino group of glycine through its pyridoxal phosphate cofactor; CO(2) is released and the remaining methylamine moiety is then transferred to the lipoamide cofactor of the H protein. The protein is Glycine dehydrogenase (decarboxylating) of Shewanella oneidensis (strain ATCC 700550 / JCM 31522 / CIP 106686 / LMG 19005 / NCIMB 14063 / MR-1).